We begin with the raw amino-acid sequence, 322 residues long: Heterogeneous nuclear ribonucleoprotein D-like (322 aa).

A disordered region spans residues M1–F36. An Omega-N-methylarginine modification is found at R6. Positions S14–F36 are enriched in low complexity. RRM domains lie at N51 to E133 and K136 to E215. K64 carries the post-translational modification N6-methyllysine. K112 is covalently cross-linked (Glycyl lysine isopeptide (Lys-Gly) (interchain with G-Cter in SUMO2)). K119 carries the N6-acetyllysine modification. S144 carries the post-translational modification Phosphoserine. Disordered stretches follow at residues V216–Q251 and S299–Y322. Residues G226–Q245 are compositionally biased toward gly residues. The interval Q245–Y322 is necessary for interaction with TNPO1. R310 is subject to Dimethylated arginine; alternate. An Omega-N-methylarginine; alternate modification is found at R310.

Interacts with TNPO1 and ZNF148. Post-translationally, dimethylation of Arg-310 is probably of the asymmetric type.

The protein resides in the nucleus. The protein localises to the cytoplasm. Acts as a transcriptional regulator. Promotes transcription repression. Promotes transcription activation in differentiated myotubes. Binds to double- and single-stranded DNA sequences. Binds to the transcription suppressor CATR sequence of the COX5B promoter. Binds with high affinity to RNA molecules that contain AU-rich elements (AREs) found within the 3'-UTR of many proto-oncogenes and cytokine mRNAs. Binds both to nuclear and cytoplasmic poly(A) mRNAs. Binds to poly(G) and poly(A), but not to poly(U) or poly(C) RNA homopolymers. Binds to the 5'-ACUAGC-3' RNA consensus sequence. The polypeptide is Heterogeneous nuclear ribonucleoprotein D-like (Hnrnpdl) (Rattus norvegicus (Rat)).